The chain runs to 604 residues: Microtubule-associated protein 70-4 (604 aa).

The segment at methionine 1–proline 33 is disordered. Residues aspartate 49–glutamine 351 adopt a coiled-coil conformation. Residues isoleucine 233 to threonine 470 form a required for targeting to microtubules region. Disordered stretches follow at residues leucine 367 to threonine 422 and glycine 434 to valine 495. The span at threonine 371 to serine 385 shows a compositional bias: low complexity. 2 stretches are compositionally biased toward polar residues: residues proline 401–threonine 422 and glutamate 468–serine 478. The stretch at leucine 521–glycine 569 forms a coiled coil.

The protein belongs to the MAP70 family.

The protein localises to the cytoplasm. It is found in the cytoskeleton. In terms of biological role, plant-specific protein that interact with microtubules. The protein is Microtubule-associated protein 70-4 (MAP70.4) of Arabidopsis thaliana (Mouse-ear cress).